The primary structure comprises 377 residues: Proteinase-activated receptor 3 (377 aa).

Residues 1 to 19 (MRAAIFAAIGALLLSPASC) form the signal peptide. Residues 20–38 (QSGMEYDADNLAKPTLSIK) constitute a propeptide, removed for receptor activation. At 39-94 (TFRGAPQNSFEEFPLSAIEGWTGTTKTVKIKCPEELDSNLHVNNATMGYLSSPLST) the chain is on the extracellular side. Asn-82 is a glycosylation site (N-linked (GlcNAc...) asparagine). Residues 95–120 (KLIPAIYILVFAVGMPANAVTLWMLF) traverse the membrane as a helical segment. Residues 121–127 (RTRTIRM) are Cytoplasmic-facing. Residues 128 to 147 (TIFYTNLAIADFLFCVTLPF) traverse the membrane as a helical segment. Topologically, residues 148-166 (RIAYHLNGNNWVFGEVMCR) are extracellular. A disulfide bond links Cys-165 and Cys-244. Residues 167 to 188 (ATTVIFYGNMYCSILLLACISI) traverse the membrane as a helical segment. Over 189-205 (NRYLAIVHPFTYRGLPK) the chain is Cytoplasmic. Residues 206 to 229 (RTYALLTCGLVWTTVFLYMLPFFI) traverse the membrane as a helical segment. The Extracellular portion of the chain corresponds to 230–259 (LKQEYYLVQQDITTCHDVHNTCESSSPFQL). Residues 260 to 279 (YYFISLAFFGFLIPFLVIIY) traverse the membrane as a helical segment. Topologically, residues 280–296 (CYTAIIWTLNAKDRRWL) are cytoplasmic. Residues 297–321 (WYIKASLLTFVIFTICFAPSNIILI) form a helical membrane-spanning segment. Topologically, residues 322–335 (IHHANYYYSNTDAL) are extracellular. The helical transmembrane segment at 336–360 (YFVYLIALCLGSLNSCLDPFLYFLM) threads the bilayer. Residues 361-377 (SKITDHSTAYLTMVKLS) are Cytoplasmic-facing.

Belongs to the G-protein coupled receptor 1 family. Interacts with INSC/inscuteable and GPSM2. Post-translationally, a proteolytic cleavage generates a new N-terminus that functions as a tethered ligand.

It localises to the cell membrane. Its function is as follows. Receptor for activated thrombin coupled to G proteins that stimulate phosphoinositide hydrolysis. The chain is Proteinase-activated receptor 3 (F2RL2) from Bos taurus (Bovine).